The chain runs to 1183 residues: SRC kinase signaling inhibitor 1 (1183 aa).

The disordered stretch occupies residues 1–44 (MGNAPSQDPERSSPPMLSADDAEYPREYRTLGGGGGGGSGGRRF). Phosphoserine is present on residues Ser13 and Ser18. Residues 31–41 (LGGGGGGGSGG) are compositionally biased toward gly residues. Ser45 is modified (phosphoserine). Residue Thr52 is modified to Phosphothreonine. Phosphoserine occurs at positions 53, 64, 143, 165, 169, 179, and 225. Tyr241 carries the post-translational modification Phosphotyrosine. The segment at 284–379 (ASRESSPTRR…ERRDVKPDED (96 aa)) is disordered. The span at 286-296 (RESSPTRRLNN) shows a compositional bias: polar residues. Residues 297–306 (LSPAPHLASG) are compositionally biased toward low complexity. Phosphoserine is present on residues Ser298, Ser307, and Ser324. Over residues 313 to 331 (PSGLPSGLQSGSPSRSRLS) the composition is skewed to low complexity. Omega-N-methylarginine is present on residues Arg329 and Arg336. Residues Ser343, Ser362, and Ser364 each carry the phosphoserine modification. Over residues 369–379 (LERRDVKPDED) the composition is skewed to basic and acidic residues. Residue Tyr396 is modified to Phosphotyrosine. Positions 466-643 (YGFRLPPSSP…ASSTPAGQPT (178 aa)) are disordered. A compositionally biased stretch (pro residues) spans 485–497 (PGGPPPPHSPYSG). Ser493, Ser496, and Ser500 each carry phosphoserine. The residue at position 501 (Arg501) is an Omega-N-methylarginine. Phosphoserine occurs at positions 503, 513, 515, 517, and 522. The span at 524-541 (GGKTRSAGSASTAGAPPS) shows a compositional bias: low complexity. Residues 562 to 574 (KDTETRERMEAME) are compositionally biased toward basic and acidic residues. A phosphoserine mark is found at Ser598 and Ser621. A phosphothreonine mark is found at Thr624 and Thr637. Residues 634-643 (ASSTPAGQPT) are compositionally biased toward low complexity. The interaction with SNAP25 stretch occupies residues 647–697 (RLQMQLHLRGLQNSASDLRGQLQQLRKLQLQNQESVRALLKRTEAELSMRV). Coiled coils occupy residues 654-674 (LRGLQNSASDLRGQLQQLRKL) and 726-746 (EELITQQLNDLEKSVEKIQRD). Ser844, Ser857, and Ser866 each carry phosphoserine. Disordered regions lie at residues 861–907 (EMPP…KAVS) and 949–1032 (DCAS…VTSK). Residue Thr884 is modified to Phosphothreonine. Position 987 is a phosphoserine (Ser987). Residues 1002 to 1011 (KSPPPPPPRR) are compositionally biased toward pro residues. Phosphoserine is present on residues Ser1043 and Ser1060. 2 disordered regions span residues 1058-1081 (AVSEVARPASTPPIMASAIKDEDD) and 1105-1183 (GASR…SISF). Polar residues predominate over residues 1135 to 1183 (QAQQQATKPSKEMSGSNETSSPVSEKPSASRTSIPVLTSFGARNSSISF).

It belongs to the SRCIN1 family. Interacts with the N-terminal coiled-coil region of SNAP25. Interacts with BCAR1/p130Cas and SRC through its C-terminal domain. Interacts with CSK, CTTN, SORBS3/vinexin, SYP and MAPRE3/EB3. Tyrosine-phosphorylated in response to EGF and to cell adhesion to integrin ligands. In terms of tissue distribution, expressed in some primary breast carcinomas where its presence is significantly associated with increased tumor size. Not detected in normal breast tissue.

It localises to the cytoplasm. The protein resides in the cytoskeleton. The protein localises to the cell projection. It is found in the axon. Its subcellular location is the dendrite. It localises to the presynapse. The protein resides in the postsynapse. The protein localises to the postsynaptic density. Functionally, acts as a negative regulator of SRC by activating CSK which inhibits SRC activity and downstream signaling, leading to impaired cell spreading and migration. Regulates dendritic spine morphology. Involved in calcium-dependent exocytosis. May play a role in neurotransmitter release or synapse maintenance. In Homo sapiens (Human), this protein is SRC kinase signaling inhibitor 1.